A 490-amino-acid polypeptide reads, in one-letter code: 4-hydroxyphenylacetaldehyde synthase (490 aa).

Residues P97, H198, and H313 each coordinate L-phenylalanine. K314 is modified (N6-(pyridoxal phosphate)lysine). F343 is an L-phenylalanine binding site.

This sequence belongs to the group II decarboxylase family. In terms of assembly, homodimer. Pyridoxal 5'-phosphate serves as cofactor.

The catalysed reaction is L-tyrosine + O2 + H2O + H(+) = (4-hydroxyphenyl)acetaldehyde + H2O2 + NH4(+) + CO2. Catalyzes the production of 4-hydroxyphenylacetaldehyde (HPAA) directly from L-tyrosine, tyramine not being formed as an intermediate. The protein is 4-hydroxyphenylacetaldehyde synthase of Rhodiola rosea (Roseroot).